The chain runs to 425 residues: Serine--tRNA ligase (425 aa).

Thr230 to Glu232 is a binding site for L-serine. ATP is bound at residue Arg261–Glu263. Glu284 provides a ligand contact to L-serine. Glu348–Ser351 contributes to the ATP binding site. Ser384 contributes to the L-serine binding site.

This sequence belongs to the class-II aminoacyl-tRNA synthetase family. Type-1 seryl-tRNA synthetase subfamily. As to quaternary structure, homodimer. The tRNA molecule binds across the dimer.

It is found in the cytoplasm. The catalysed reaction is tRNA(Ser) + L-serine + ATP = L-seryl-tRNA(Ser) + AMP + diphosphate + H(+). The enzyme catalyses tRNA(Sec) + L-serine + ATP = L-seryl-tRNA(Sec) + AMP + diphosphate + H(+). It participates in aminoacyl-tRNA biosynthesis; selenocysteinyl-tRNA(Sec) biosynthesis; L-seryl-tRNA(Sec) from L-serine and tRNA(Sec): step 1/1. Catalyzes the attachment of serine to tRNA(Ser). Is also able to aminoacylate tRNA(Sec) with serine, to form the misacylated tRNA L-seryl-tRNA(Sec), which will be further converted into selenocysteinyl-tRNA(Sec). This chain is Serine--tRNA ligase, found in Streptococcus pyogenes serotype M5 (strain Manfredo).